The primary structure comprises 337 residues: Oxidoreductase andH (337 aa).

This sequence belongs to the NmrA-type oxidoreductase family.

It functions in the pathway secondary metabolite biosynthesis; terpenoid biosynthesis. In terms of biological role, oxidoreductase; part of the gene cluster that mediates the biosynthesis of anditomin, a fungal meroterpenoid. The first step of the pathway is the synthesis of 3,5-dimethylorsellinic acid (DMOA) by the polyketide synthase andM. DMOA is then converted to the phthalide compound 5,7-dihydroxy-4,6-dimethylphthalide (DHDMP) by the cytochrome P450 monooxygenase andK, which is further prenylated by the prenyltransferase andD to yield farnesyl-DHDMP. Further epoxidation by the FAD-dependent monooxygenase andE leads to epoxyfarnesyl-DHDMP. The next step involves the terpene cyclase andB that converts epoxyfarnesyl-DHDMP into preandiloid A through opening of the epoxide ring followed by the cyclization of the farnesyl moiety. Preandiloid A is in turn oxidized at the C-3 hydroxyl group to yield preandiloid B by the dehydrogenase andC. The dioxygenase andA is solely responsible for the dehydrogenation of preandiloid B leading to the enone preandiloid C, as well as for the intriguing structural rearrangement to generate the bicyclo[2.2.2]octane core, transforming preandiloid C into andiconin. FAD-binding monooxygenase andJ then produces andilesin D which is reduced by dehydrogenase andI to yield andilesin A. Action of acetyltransferase andG followed by a spontaneous acetate elimination leads then to andilesin B, which is in turn substrate of the short chain dehydrogenase andH to yield andilesin C. Finally, the dioxygenase andF catalyzes the transformation of andilesin C to anditomin. The protein is Oxidoreductase andH of Emericella variicolor (Aspergillus stellatus).